Reading from the N-terminus, the 130-residue chain is Cholecystokinin (130 aa).

The signal sequence occupies residues 1-20; sequence MYSGICIYMFLAMLSTSSSG. A propeptide spanning residues 21–60 is cleaved from the precursor; sequence QQATGSHNENPVATELEQSLTEHHRHVRVPSSAGQLKPIQ. Sulfotyrosine is present on tyrosine 112. Phenylalanine 118 carries the phenylalanine amide modification. A propeptide spanning residues 122 to 130 is cleaved from the precursor; sequence SAEEYEYSS. Tyrosine 126 and tyrosine 128 each carry sulfotyrosine.

This sequence belongs to the gastrin/cholecystokinin family. In terms of processing, the precursor is cleaved by proteases to produce a number of active cholecystokinins. As to expression, expressed in brain, duodenum and small intestine.

Its subcellular location is the secreted. Its function is as follows. This peptide hormone induces gall bladder contraction and the release of pancreatic enzymes in the gut. Its function in the brain is not clear. The protein is Cholecystokinin of Trachemys scripta (Red-eared slider turtle).